We begin with the raw amino-acid sequence, 273 residues long: Dermonecrotic toxin LdSicTox-alphaIB3avi (273 aa).

The active site involves His5. Residues Glu25 and Asp27 each contribute to the Mg(2+) site. Residue His41 is the Nucleophile of the active site. Cystine bridges form between Cys45/Cys51 and Cys47/Cys190. Position 85 (Asp85) interacts with Mg(2+).

Belongs to the arthropod phospholipase D family. Class II subfamily. Mg(2+) is required as a cofactor. In terms of tissue distribution, expressed by the venom gland.

The protein resides in the secreted. It catalyses the reaction an N-(acyl)-sphingosylphosphocholine = an N-(acyl)-sphingosyl-1,3-cyclic phosphate + choline. The enzyme catalyses an N-(acyl)-sphingosylphosphoethanolamine = an N-(acyl)-sphingosyl-1,3-cyclic phosphate + ethanolamine. It carries out the reaction a 1-acyl-sn-glycero-3-phosphocholine = a 1-acyl-sn-glycero-2,3-cyclic phosphate + choline. The catalysed reaction is a 1-acyl-sn-glycero-3-phosphoethanolamine = a 1-acyl-sn-glycero-2,3-cyclic phosphate + ethanolamine. Its function is as follows. Dermonecrotic toxins cleave the phosphodiester linkage between the phosphate and headgroup of certain phospholipids (sphingolipid and lysolipid substrates), forming an alcohol (often choline) and a cyclic phosphate. This toxin acts on sphingomyelin (SM). It may also act on ceramide phosphoethanolamine (CPE), lysophosphatidylcholine (LPC) and lysophosphatidylethanolamine (LPE), but not on lysophosphatidylserine (LPS), and lysophosphatidylglycerol (LPG). It acts by transphosphatidylation, releasing exclusively cyclic phosphate products as second products. Induces dermonecrosis, hemolysis, increased vascular permeability, edema, inflammatory response, and platelet aggregation. This Loxosceles deserta (Desert recluse spider) protein is Dermonecrotic toxin LdSicTox-alphaIB3avi.